We begin with the raw amino-acid sequence, 399 residues long: Acetate kinase (399 aa).

Asn-10 contributes to the Mg(2+) binding site. ATP is bound at residue Lys-17. Position 91 (Arg-91) interacts with substrate. The active-site Proton donor/acceptor is the Asp-148. Residues 208-212, 283-285, and 331-335 contribute to the ATP site; these read HLGNG, DCR, and GIGEN. Glu-385 is a Mg(2+) binding site.

This sequence belongs to the acetokinase family. Homodimer. The cofactor is Mg(2+). Mn(2+) serves as cofactor.

It localises to the cytoplasm. The enzyme catalyses acetate + ATP = acetyl phosphate + ADP. The protein operates within metabolic intermediate biosynthesis; acetyl-CoA biosynthesis; acetyl-CoA from acetate: step 1/2. In terms of biological role, catalyzes the formation of acetyl phosphate from acetate and ATP. Can also catalyze the reverse reaction. The polypeptide is Acetate kinase (Shewanella sp. (strain ANA-3)).